Here is a 209-residue protein sequence, read N- to C-terminus: Uracil phosphoribosyltransferase (209 aa).

5-phospho-alpha-D-ribose 1-diphosphate is bound by residues Arg-79, Arg-104, and 131-139 (DPMLATGGS). Residues Ile-194 and 199-201 (GDA) contribute to the uracil site. Asp-200 serves as a coordination point for 5-phospho-alpha-D-ribose 1-diphosphate.

It belongs to the UPRTase family. Requires Mg(2+) as cofactor.

It carries out the reaction UMP + diphosphate = 5-phospho-alpha-D-ribose 1-diphosphate + uracil. It functions in the pathway pyrimidine metabolism; UMP biosynthesis via salvage pathway; UMP from uracil: step 1/1. With respect to regulation, allosterically activated by GTP. Catalyzes the conversion of uracil and 5-phospho-alpha-D-ribose 1-diphosphate (PRPP) to UMP and diphosphate. This chain is Uracil phosphoribosyltransferase, found in Streptococcus mutans serotype c (strain ATCC 700610 / UA159).